An 86-amino-acid polypeptide reads, in one-letter code: UPF0335 protein mll3968 (86 aa).

It belongs to the UPF0335 family.

The polypeptide is UPF0335 protein mll3968 (Mesorhizobium japonicum (strain LMG 29417 / CECT 9101 / MAFF 303099) (Mesorhizobium loti (strain MAFF 303099))).